A 295-amino-acid polypeptide reads, in one-letter code: Nucleotide-binding protein BLi03725/BL03417 (295 aa).

16 to 23 serves as a coordination point for ATP; that stretch reads GMSGAGKT. GTP is bound at residue 67-70; that stretch reads DLRG.

The protein belongs to the RapZ-like family.

Displays ATPase and GTPase activities. The sequence is that of Nucleotide-binding protein BLi03725/BL03417 from Bacillus licheniformis (strain ATCC 14580 / DSM 13 / JCM 2505 / CCUG 7422 / NBRC 12200 / NCIMB 9375 / NCTC 10341 / NRRL NRS-1264 / Gibson 46).